Here is a 513-residue protein sequence, read N- to C-terminus: Probable cytosol aminopeptidase (513 aa).

Residues lysine 275 and aspartate 280 each coordinate Mn(2+). Residue lysine 287 is part of the active site. Mn(2+) contacts are provided by aspartate 298, aspartate 357, and glutamate 359. Arginine 361 is a catalytic residue.

Belongs to the peptidase M17 family. It depends on Mn(2+) as a cofactor.

It localises to the cytoplasm. It carries out the reaction Release of an N-terminal amino acid, Xaa-|-Yaa-, in which Xaa is preferably Leu, but may be other amino acids including Pro although not Arg or Lys, and Yaa may be Pro. Amino acid amides and methyl esters are also readily hydrolyzed, but rates on arylamides are exceedingly low.. It catalyses the reaction Release of an N-terminal amino acid, preferentially leucine, but not glutamic or aspartic acids.. In terms of biological role, presumably involved in the processing and regular turnover of intracellular proteins. Catalyzes the removal of unsubstituted N-terminal amino acids from various peptides. The protein is Probable cytosol aminopeptidase of Streptomyces avermitilis (strain ATCC 31267 / DSM 46492 / JCM 5070 / NBRC 14893 / NCIMB 12804 / NRRL 8165 / MA-4680).